A 106-amino-acid polypeptide reads, in one-letter code: uncharacterized protein (106 aa).

This is an uncharacterized protein from Homo sapiens (Human).